The following is a 552-amino-acid chain: E3 ubiquitin-protein ligase MGRN1 (552 aa).

A lipid anchor (N-myristoyl glycine) is attached at Gly-2. Residues 278 to 317 (CVVCLSDLRDTLILPCRHLCLCTSCADTLRYQANNCPICR) form an RING-type zinc finger. A disordered region spans residues 355–384 (SCPFKKSKPHPASLASKKPKRETNSDSVPP). The Required for TSG101-binding signature appears at 406-409 (PSAP). Phosphotyrosine is present on Tyr-411. Residues 439–552 (SSRQKGRPQS…PDSCSVGIDE (114 aa)) form a disordered region. The segment covering 450–460 (APDSTLRSPSS) has biased composition (polar residues). Residues 464–475 (EEDEEKLSEDVD) are compositionally biased toward acidic residues. The residue at position 471 (Ser-471) is a Phosphoserine. The segment covering 504 to 523 (SSSPQQGTRAASIENVLQDS) has biased composition (polar residues). Residue Ser-524 is modified to Phosphoserine.

In terms of assembly, interacts with MC1R and MC4R, but not with TBXA2R. Interacts with TSG101. Interacts with mislocalized cytosolically exposed PRNP; this interaction alters MGRN1 subcellular location and causes lysosomal enlargement. In terms of processing, autoubiquitinated in vitro.

It localises to the early endosome. The protein localises to the cytoplasm. The protein resides in the cytosol. Its subcellular location is the nucleus. It is found in the cell membrane. The enzyme catalyses S-ubiquitinyl-[E2 ubiquitin-conjugating enzyme]-L-cysteine + [acceptor protein]-L-lysine = [E2 ubiquitin-conjugating enzyme]-L-cysteine + N(6)-ubiquitinyl-[acceptor protein]-L-lysine.. Its pathway is protein modification; protein ubiquitination. E3 ubiquitin-protein ligase. Mediates monoubiquitination at multiple sites of TSG101 in the presence of UBE2D1, but not of UBE2G1, nor UBE2H. Plays a role in the regulation of endosome-to-lysosome trafficking. Impairs MC1R- and MC4R-signaling by competing with GNAS-binding to MCRs and inhibiting agonist-induced cAMP production. Does not inhibit ADRB2-signaling. Does not promote MC1R ubiquitination. Acts also as a negative regulator of hedgehog signaling. In Homo sapiens (Human), this protein is E3 ubiquitin-protein ligase MGRN1 (MGRN1).